A 196-amino-acid chain; its full sequence is NADH-quinone oxidoreductase subunit B (196 aa).

The [4Fe-4S] cluster site is built by cysteine 75, cysteine 76, cysteine 140, and cysteine 170.

Belongs to the complex I 20 kDa subunit family. In terms of assembly, NDH-1 is composed of 14 different subunits. Subunits NuoB, C, D, E, F, and G constitute the peripheral sector of the complex. [4Fe-4S] cluster is required as a cofactor.

The protein resides in the cell inner membrane. It catalyses the reaction a quinone + NADH + 5 H(+)(in) = a quinol + NAD(+) + 4 H(+)(out). In terms of biological role, NDH-1 shuttles electrons from NADH, via FMN and iron-sulfur (Fe-S) centers, to quinones in the respiratory chain. Couples the redox reaction to proton translocation (for every two electrons transferred, four hydrogen ions are translocated across the cytoplasmic membrane), and thus conserves the redox energy in a proton gradient. This chain is NADH-quinone oxidoreductase subunit B, found in Caulobacter sp. (strain K31).